A 159-amino-acid polypeptide reads, in one-letter code: UPF0225 protein plu2503 (159 aa).

This sequence belongs to the UPF0225 family.

This is UPF0225 protein plu2503 from Photorhabdus laumondii subsp. laumondii (strain DSM 15139 / CIP 105565 / TT01) (Photorhabdus luminescens subsp. laumondii).